Here is a 98-residue protein sequence, read N- to C-terminus: Protein translation factor SUI1 homolog (98 aa).

This sequence belongs to the SUI1 family.

The sequence is that of Protein translation factor SUI1 homolog from Thermococcus onnurineus (strain NA1).